Reading from the N-terminus, the 213-residue chain is Uridine kinase (213 aa).

12 to 19 (GGSCSGKT) provides a ligand contact to ATP.

Belongs to the uridine kinase family.

The protein resides in the cytoplasm. It carries out the reaction uridine + ATP = UMP + ADP + H(+). The catalysed reaction is cytidine + ATP = CMP + ADP + H(+). Its pathway is pyrimidine metabolism; CTP biosynthesis via salvage pathway; CTP from cytidine: step 1/3. It participates in pyrimidine metabolism; UMP biosynthesis via salvage pathway; UMP from uridine: step 1/1. In Mycoplasma genitalium (strain ATCC 33530 / DSM 19775 / NCTC 10195 / G37) (Mycoplasmoides genitalium), this protein is Uridine kinase (udk).